A 341-amino-acid chain; its full sequence is Paired box protein Pax-9 (341 aa).

The segment at residues 4-130 is a DNA-binding region (paired); the sequence is AFGEVNQLGG…SSISRILRNK (127 aa). Residues 7-63 are PAI subdomain; it reads EVNQLGGVFVNGRPLPNAIRLRIVELAQLGIRPCDISRQLRVSHGCVSKILARYNET. The segment at 82-130 is RED subdomain; sequence TVVKHIRTYKQRDPGIFAWEIRDRLLADGVCDKYNVPSVSSISRILRNK. Positions 168–189 are interaction with KDM5B; the sequence is AAAAKVPTPPGVPAIPGSVAMP.

In terms of assembly, interacts with KDM5B.

The protein resides in the nucleus. In terms of biological role, transcription factor required for normal development of thymus, parathyroid glands, ultimobranchial bodies, teeth, skeletal elements of skull and larynx as well as distal limbs. In Saimiri boliviensis boliviensis (Bolivian squirrel monkey), this protein is Paired box protein Pax-9 (PAX9).